A 507-amino-acid chain; its full sequence is (6-4) photolyase (507 aa).

6,7-dimethyl-8-(1-D-ribityl)lumazine is bound by residues 9 to 10 (GD), 32 to 40 (CEVMAEASY), and G105. FAD-binding positions include 265-269 (HSLLS) and N273. Residue C350 participates in [4Fe-4S] cluster binding. FAD is bound by residues 363 to 366 (YAHH), D397, and N406. Positions 438, 441, and 454 each coordinate [4Fe-4S] cluster.

This sequence belongs to the iron-sulfur bacterial cryptochrome/photolyase (FeS-BCP) family. FAD is required as a cofactor. 6,7-dimethyl-8-(1-D-ribityl)lumazine serves as cofactor. It depends on [4Fe-4S] cluster as a cofactor.

The catalysed reaction is (6-4) photoproduct (in DNA) = 2 pyrimidine residues (in DNA).. Functionally, photolyase involved in the repair of UV-induced (6-4) lesions in DNA. Catalyzes the photoreactivation of (6-4) pyrimidine-pyrimidone photoproducts by using blue-light energy. Can repair (6-4) photoproducts in ssDNA as well as in dsDNA. The chain is (6-4) photolyase from Agrobacterium fabrum (strain C58 / ATCC 33970) (Agrobacterium tumefaciens (strain C58)).